The chain runs to 117 residues: UPF0127 protein PYRAB11210 (117 aa).

The protein belongs to the UPF0127 family.

The chain is UPF0127 protein PYRAB11210 from Pyrococcus abyssi (strain GE5 / Orsay).